The sequence spans 284 residues: uncharacterized protein (284 aa).

A signal peptide spans 1-23 (MKRGCAIAVMICGLITSVSAASA).

Belongs to the surface antigen msp4 family.

This is an uncharacterized protein from Brucella suis biovar 1 (strain 1330).